A 201-amino-acid polypeptide reads, in one-letter code: uncharacterized protein (201 aa).

This is an uncharacterized protein from Caenorhabditis elegans.